Reading from the N-terminus, the 195-residue chain is Ribonuclease HII (195 aa).

Residues 8–195 enclose the RNase H type-2 domain; the sequence is WGVVGVDEAG…FAPVRRLLGG (188 aa). Residues D14, E15, and D106 each contribute to the a divalent metal cation site.

The protein belongs to the RNase HII family. Requires Mn(2+) as cofactor. It depends on Mg(2+) as a cofactor.

The protein resides in the cytoplasm. The enzyme catalyses Endonucleolytic cleavage to 5'-phosphomonoester.. Functionally, endonuclease that specifically degrades the RNA of RNA-DNA hybrids. The chain is Ribonuclease HII from Halorhodospira halophila (strain DSM 244 / SL1) (Ectothiorhodospira halophila (strain DSM 244 / SL1)).